The chain runs to 264 residues: Undecaprenyl-diphosphatase (264 aa).

Helical transmembrane passes span 1–21 (MTVF…FLPI), 40–60 (GLTF…AFFW), 81–101 (MFWY…LLEE), 109–129 (TPLL…WADA), 140–160 (ISMA…IPGV), 183–203 (FSFL…LKDI), 211–231 (AFIT…SFLL), and 239–259 (FALF…LAAA).

This sequence belongs to the UppP family.

It localises to the cell membrane. The catalysed reaction is di-trans,octa-cis-undecaprenyl diphosphate + H2O = di-trans,octa-cis-undecaprenyl phosphate + phosphate + H(+). Its function is as follows. Catalyzes the dephosphorylation of undecaprenyl diphosphate (UPP). Confers resistance to bacitracin. The protein is Undecaprenyl-diphosphatase of Pelotomaculum thermopropionicum (strain DSM 13744 / JCM 10971 / SI).